The primary structure comprises 338 residues: (2Z,6E)-hedycaryol synthase (338 aa).

Residues Asp-82 and Glu-87 each coordinate Mg(2+). Positions 82–87 match the DDXXXE motif motif; that stretch reads DDQIDE. Arg-175 is a substrate binding site. Mg(2+) contacts are provided by Asn-221 and Ser-225. The NXXXSXXXE motif signature appears at 221 to 229; that stretch reads NDVFSVERE. Residue Arg-228 coordinates substrate. Residue Glu-229 participates in Mg(2+) binding.

The protein belongs to the terpene synthase family. In terms of assembly, homodimer. It depends on Mg(2+) as a cofactor.

It catalyses the reaction (2E,6E)-farnesyl diphosphate + H2O = (2Z,6E)-hedycaryol + diphosphate. The protein operates within secondary metabolite biosynthesis; terpenoid biosynthesis. Catalyzes the conversion of (2E,6E)-farnesyl diphosphate (FPP) into (2Z,6E)-hedycaryol via a 1,11-cyclization. The sequence is that of (2Z,6E)-hedycaryol synthase from Kitasatospora setae (strain ATCC 33774 / DSM 43861 / JCM 3304 / KCC A-0304 / NBRC 14216 / KM-6054) (Streptomyces setae).